A 529-amino-acid polypeptide reads, in one-letter code: Na(+)/H(+) antiporter NhaB (529 aa).

12 consecutive transmembrane segments (helical) span residues Phe-13–Pro-33, Ile-34–Phe-54, Leu-90–Met-110, Leu-113–Leu-133, Cys-136–Ile-156, Leu-205–Pro-225, Phe-241–Phe-261, Gly-306–Ile-326, Gly-327–Gly-347, Glu-351–Ile-371, Ala-451–Ile-471, and Val-479–Phe-499.

The protein belongs to the NhaB Na(+)/H(+) (TC 2.A.34) antiporter family.

The protein resides in the cell inner membrane. It catalyses the reaction 2 Na(+)(in) + 3 H(+)(out) = 2 Na(+)(out) + 3 H(+)(in). Its function is as follows. Na(+)/H(+) antiporter that extrudes sodium in exchange for external protons. The protein is Na(+)/H(+) antiporter NhaB of Vibrio vulnificus (strain CMCP6).